The primary structure comprises 320 residues: Acetyl-coenzyme A carboxylase carboxyl transferase subunit alpha (320 aa).

The CoA carboxyltransferase C-terminal domain maps to 41–295 (KIEEKAQQAL…GDAIAAAFAE (255 aa)).

Belongs to the AccA family. Acetyl-CoA carboxylase is a heterohexamer composed of biotin carboxyl carrier protein (AccB), biotin carboxylase (AccC) and two subunits each of ACCase subunit alpha (AccA) and ACCase subunit beta (AccD).

Its subcellular location is the cytoplasm. It catalyses the reaction N(6)-carboxybiotinyl-L-lysyl-[protein] + acetyl-CoA = N(6)-biotinyl-L-lysyl-[protein] + malonyl-CoA. Its pathway is lipid metabolism; malonyl-CoA biosynthesis; malonyl-CoA from acetyl-CoA: step 1/1. Component of the acetyl coenzyme A carboxylase (ACC) complex. First, biotin carboxylase catalyzes the carboxylation of biotin on its carrier protein (BCCP) and then the CO(2) group is transferred by the carboxyltransferase to acetyl-CoA to form malonyl-CoA. The sequence is that of Acetyl-coenzyme A carboxylase carboxyl transferase subunit alpha from Rhodopseudomonas palustris (strain ATCC BAA-98 / CGA009).